The primary structure comprises 1340 residues: Protein SHORT ROOT IN SALT MEDIUM 1 (1340 aa).

6 disordered regions span residues 1–73, 161–185, 357–473, 723–750, 784–990, and 1063–1269; these read MHRD…RSHL, YGEQSSSYLGRELQNEPTRRYADPS, EEER…IRRS, TVEVTKDAEKKSPGDTSGTPTTGTKKTV, PETT…PPRA, and RNQR…KREE. Positions 7 to 39 are enriched in low complexity; that stretch reads SSRGTGYGQQQYGSQSGYSQNLGSGYPGSSVSG. Polar residues predominate over residues 46–60; that stretch reads QISLSSRHPSITGAP. 3 stretches are compositionally biased toward basic and acidic residues: residues 173–182, 357–470, and 723–735; these read LQNEPTRRYA, EEER…EASI, and TVEVTKDAEKKSP. Residues 355–426 are a coiled coil; that stretch reads LREEERRRED…RERKRALEIK (72 aa). Over residues 810 to 824 the composition is skewed to polar residues; the sequence is GDTSDPSAKANEQTP. The segment covering 828-840 has biased composition (basic residues); the sequence is IVKKKIIKRVAKR. 4 stretches are compositionally biased toward basic and acidic residues: residues 841 to 872, 887 to 988, 1069 to 1097, and 1105 to 1138; these read KVAEIDNKMDGDSKKDGDSDEKKVMEVGKKSS, EDVK…EEPP, HQEELSVKQNEAKSQDKRQKTAEHEDKEA, and PGKDDKETSGKETVDGSREIADKEAVAKTKETLG. A coiled-coil region spans residues 1052 to 1086; that stretch reads LKKLRVKIVRQRNQRKRHQEELSVKQNEAKSQDKR. Residues 1153–1204 are compositionally biased toward acidic residues; the sequence is ENQDEEDDDGDDDPEEDPEEDPEEDPEEDPEEDPEECEEMDVANTEQEEPAE. Composition is skewed to basic and acidic residues over residues 1205 to 1214 and 1229 to 1257; these read EPQKKEENLE and TDNRKEERGPNDSKTEIKPKSETEKHGKQ. An EF-hand domain is found at 1270-1305; sequence TVDKELLQAFRFFDRNQAGYVRVEDMRVTIHSLGKF.

As to quaternary structure, interacts with BHLH148/RITF1. As to expression, expressed ubiquitously at high levels, including in guard cells.

It localises to the nucleus. Functionally, required for salt tolerance and sodium (Na) homeostasis after salt stress. Together with BHLH148/RITF1, regulates the transcription of several genes involved in the detoxification of reactive oxygen species (ROS) generated by salt (NaCl) stress. Binds calcium. The sequence is that of Protein SHORT ROOT IN SALT MEDIUM 1 from Arabidopsis thaliana (Mouse-ear cress).